We begin with the raw amino-acid sequence, 156 residues long: Cell division protein SepF (156 aa).

Residues 20-36 are compositionally biased toward basic and acidic residues; the sequence is AQYGYEKEQTDMKKQQD. The segment at 20–50 is disordered; sequence AQYGYEKEQTDMKKQQDPPEQQDVTFPKAQP.

The protein belongs to the SepF family. Homodimer. Interacts with FtsZ.

It localises to the cytoplasm. Its function is as follows. Cell division protein that is part of the divisome complex and is recruited early to the Z-ring. Probably stimulates Z-ring formation, perhaps through the cross-linking of FtsZ protofilaments. Its function overlaps with FtsA. This is Cell division protein SepF from Bacillus cereus (strain G9842).